A 249-amino-acid chain; its full sequence is Structural protein VP10 (249 aa).

It localises to the virion. Forms the virion spike 'foot' and helps anchor the VP9 spike 'head' protein in the virion. The polypeptide is Structural protein VP10 (Segment-10) (Banna virus (BAV)).